A 137-amino-acid polypeptide reads, in one-letter code: Nucleoside diphosphate kinase (137 aa).

6 residues coordinate ATP: Lys-9, Phe-57, Arg-85, Thr-91, Arg-102, and Asn-112. His-115 serves as the catalytic Pros-phosphohistidine intermediate.

Belongs to the NDK family. Homotetramer. The cofactor is Mg(2+).

It localises to the cytoplasm. It carries out the reaction a 2'-deoxyribonucleoside 5'-diphosphate + ATP = a 2'-deoxyribonucleoside 5'-triphosphate + ADP. The enzyme catalyses a ribonucleoside 5'-diphosphate + ATP = a ribonucleoside 5'-triphosphate + ADP. In terms of biological role, major role in the synthesis of nucleoside triphosphates other than ATP. The ATP gamma phosphate is transferred to the NDP beta phosphate via a ping-pong mechanism, using a phosphorylated active-site intermediate. The sequence is that of Nucleoside diphosphate kinase from Campylobacter hominis (strain ATCC BAA-381 / DSM 21671 / CCUG 45161 / LMG 19568 / NCTC 13146 / CH001A).